The primary structure comprises 1025 residues: MHRKKVDNRIRILIENGVAERQRSLFVVVGDRGKDQVVILHHMLSKATVKARPSVLWCYKKELGFSSHRKKRMRQLQKKIKNGTLNIKQDDPFELFIAATNIRYCYYNETHKILGNTFGMCVLQDFEALTPNLLARTVETVEGGGLVVILLRTMNSLKQLYTVTMDVHSRYRTEAHQDVVGRFNERFILSLASCKKCLVIDDQLNILPISSHVATMEALPPQTPDESLGPSDLELRELKESLQDTQPVGVLVDCCKTLDQAKAVLKFIEGISEKTLRSTVALTAARGRGKSAALGLAIAGAVAFGYSNIFVTSPSPDNLHTLFEFVFKGFDALQYQEHLDYEIIQSLNPEFNKAVIRVNVFREHRQTIQYIHPADAVKLGQAELVVIDEAAAIPLPLVKSLLGPYLVFMASTINGYEGTGRSLSLKLIQQLRQQSAQSQVSTTAENKTTTTARLASARTLYEVSLQESIRYAPGDAVEKWLNDLLCLDCLNITRIVSGCPLPEACELYYVNRDTLFCYHKASEVFLQRLMALYVASHYKNSPNDLQMLSDAPAHHLFCLLPPVPPTQNALPEVLAVIQVCLEGEISRQSILNSLSRGKKASGDLIPWTVSEQFQDPDFGGLSGGRVVRIAVHPDYQGMGYGSRALQLLQMYYEGRFPCLEEKVLETPQEIHTVSSEAVSLLEEVITPRKDLPPLLLKLNERPAERLDYLGVSYGLTPRLLKFWKRAGFVPVYLRQTPNDLTGEHSCIMLKTLTDEDEADQGGWLAAFWKDFRRRFLALLSYQFSTFSPSLALNIIQNRNMGKPAQPALSREELEALFLPYDLKRLEMYSRNMVDYHLIMDMIPAISRIYFLNQLGDLALSAAQSALLLGIGLQHKSVDQLEKEIELPSGQLMGLFNRIIRKVVKLFNEVQEKAIEEQMVAAKDVVMEPTMKTLSDDLDEAAKEFQEKHKKEVGKLKSMDLSEYIIRGDDEEWNEVLNKAGPNASIISLKSDKKRKLEAKQEPKQSKKLKNRETKNKKDMKLKRKK.

287–296 (GRGKSAALGL) serves as a coordination point for ATP. Lys-426 carries the N6-acetyllysine modification. Arg-470 is a binding site for ATP. Positions 558–753 (CLLPPVPPTQ…HSCIMLKTLT (196 aa)) constitute an N-acetyltransferase domain. Acetyl-CoA contacts are provided by residues 629–631 (IAV) and 636–642 (QGMGYGS). The required for localization to the nucleolus and midbody stretch occupies residues 702–1025 (PAERLDYLGV…KKDMKLKRKK (324 aa)). Thr-716 is modified (phosphothreonine). Arg-725 contacts acetyl-CoA. Phosphoserine is present on residues Ser-934, Ser-984, and Ser-987. The interval 990–1025 (SDKKRKLEAKQEPKQSKKLKNRETKNKKDMKLKRKK) is disordered. The segment covering 997-1018 (EAKQEPKQSKKLKNRETKNKKD) has biased composition (basic and acidic residues).

It belongs to the RNA cytidine acetyltransferase family. NAT10 subfamily. As to quaternary structure, part of the small subunit (SSU) processome, composed of more than 70 proteins and the RNA chaperone small nucleolar RNA (snoRNA) U3. Interacts with THUMPD1. Interacts with SUN1 (via N-terminus). Interacts with TERT. In terms of processing, acetylation at Lys-426 is required to activation of rRNA transcription. May be autoacetylated; however ability to autoacetylate in vivo requires additional evidences.

Its subcellular location is the nucleus. It is found in the nucleolus. The protein localises to the midbody. It carries out the reaction a cytidine in 18S rRNA + acetyl-CoA + ATP + H2O = an N(4)-acetylcytidine in 18S rRNA + ADP + phosphate + CoA + H(+). The enzyme catalyses a cytidine in tRNA + acetyl-CoA + ATP + H2O = an N(4)-acetylcytidine in tRNA + ADP + phosphate + CoA + H(+). The catalysed reaction is a cytidine in mRNA + acetyl-CoA + ATP + H2O = an N(4)-acetylcytidine in mRNA + ADP + phosphate + CoA + H(+). Specifically inhibited by remodelin (4-[2-(2-cyclopentylidenehydrazinyl)-4-thiazolyl]-benzonitrile, monohydrobromide), a hydrobromide salt molecule. Remodelin can improve nuclear architecture, chromatin organization and fitness of cells from patients suffering from Hutchinson-Gilford progeria syndrome (HGPS); molecular mechanisms explaining the relation between NAT10 activity and nuclear architecture are however unclear. Functionally, RNA cytidine acetyltransferase that catalyzes the formation of N(4)-acetylcytidine (ac4C) modification on mRNAs, 18S rRNA and tRNAs. Catalyzes ac4C modification of a broad range of mRNAs, enhancing mRNA stability and translation. mRNA ac4C modification is frequently present within wobble cytidine sites and promotes translation efficiency. Mediates the formation of ac4C at position 1842 in 18S rRNA. May also catalyze the formation of ac4C at position 1337 in 18S rRNA. Required for early nucleolar cleavages of precursor rRNA at sites A0, A1 and A2 during 18S rRNA synthesis. Catalyzes the formation of ac4C in serine and leucine tRNAs. Requires the tRNA-binding adapter protein THUMPD1 for full tRNA acetyltransferase activity but not for 18S rRNA acetylation. In addition to RNA acetyltransferase activity, also able to acetylate lysine residues of proteins, such as histones, microtubules, p53/TP53 and MDM2, in vitro. The relevance of the protein lysine acetyltransferase activity is however unsure in vivo. Activates telomerase activity by stimulating the transcription of TERT, and may also regulate telomerase function by affecting the balance of telomerase subunit assembly, disassembly, and localization. Involved in the regulation of centrosome duplication by acetylating CENATAC during mitosis, promoting SASS6 proteasome degradation. Part of the small subunit (SSU) processome, first precursor of the small eukaryotic ribosomal subunit. During the assembly of the SSU processome in the nucleolus, many ribosome biogenesis factors, an RNA chaperone and ribosomal proteins associate with the nascent pre-rRNA and work in concert to generate RNA folding, modifications, rearrangements and cleavage as well as targeted degradation of pre-ribosomal RNA by the RNA exosome. This is RNA cytidine acetyltransferase from Homo sapiens (Human).